We begin with the raw amino-acid sequence, 487 residues long: FAD-dependent oxidoreductase domain-containing protein 1 (487 aa).

A helical transmembrane segment spans residues 62 to 82 (EQADVVIIGGGILGLSVAFWL).

As to quaternary structure, associates with components of the mitochondrial respiratory chain complex I. It depends on FAD as a cofactor.

The protein localises to the mitochondrion inner membrane. Its function is as follows. Required for the assembly of the mitochondrial membrane respiratory chain NADH dehydrogenase (Complex I). Involved in mid-late stages of complex I assembly. This chain is FAD-dependent oxidoreductase domain-containing protein 1 (Foxred1), found in Mus musculus (Mouse).